The primary structure comprises 559 residues: 2-isopropylmalate synthase (559 aa).

The Pyruvate carboxyltransferase domain occupies 33–307; sequence PIWCSSDLRD…DPQLDFSDID (275 aa). 4 residues coordinate Mg(2+): aspartate 42, histidine 246, histidine 248, and asparagine 282. Residues 439-559 form a regulatory domain region; it reads ANTPYALVSH…SLSQQEAKAA (121 aa).

It belongs to the alpha-IPM synthase/homocitrate synthase family. LeuA type 2 subfamily. Homodimer. The cofactor is Mg(2+).

Its subcellular location is the cytoplasm. It carries out the reaction 3-methyl-2-oxobutanoate + acetyl-CoA + H2O = (2S)-2-isopropylmalate + CoA + H(+). Its pathway is amino-acid biosynthesis; L-leucine biosynthesis; L-leucine from 3-methyl-2-oxobutanoate: step 1/4. Functionally, catalyzes the condensation of the acetyl group of acetyl-CoA with 3-methyl-2-oxobutanoate (2-ketoisovalerate) to form 3-carboxy-3-hydroxy-4-methylpentanoate (2-isopropylmalate). The chain is 2-isopropylmalate synthase from Pseudomonas fluorescens (strain SBW25).